The sequence spans 362 residues: uncharacterized protein (362 aa).

The segment covering 314-323 (GEEKEPKQES) has biased composition (basic and acidic residues). Residues 314–362 (GEEKEPKQESQEQLFNPFTIDEMLTEEQQQQQEEENNATEEEGDTVKLG) are disordered. Acidic residues predominate over residues 345-356 (QEEENNATEEEG).

This is an uncharacterized protein from Acidianus two-tailed virus (ATV).